The chain runs to 190 residues: dTTP/UTP pyrophosphatase (190 aa).

The Proton acceptor role is filled by Asp-70.

Belongs to the Maf family. YhdE subfamily. A divalent metal cation serves as cofactor.

Its subcellular location is the cytoplasm. The enzyme catalyses dTTP + H2O = dTMP + diphosphate + H(+). The catalysed reaction is UTP + H2O = UMP + diphosphate + H(+). Functionally, nucleoside triphosphate pyrophosphatase that hydrolyzes dTTP and UTP. May have a dual role in cell division arrest and in preventing the incorporation of modified nucleotides into cellular nucleic acids. This is dTTP/UTP pyrophosphatase from Gloeobacter violaceus (strain ATCC 29082 / PCC 7421).